Reading from the N-terminus, the 252-residue chain is MILHAQAKHGKPGLPWLVFLHGFSGDCHEWQEVGEAFADYSRLYVDLPGHGGSAAISVDGFDDVTDLLRKTLVSYNILEFWLVGYSLGGRVAMMAACQGLAGLCGVIVEGGHPGLQNAEQRAERQRSDRQWAQRFCTEPLTAVFADWYQQPVFASLNDDQRRELVALRSNNNGATLAAMLEATSLAVQPDLRANLSARTFAFYYLCGERDSKFRALAAELAADCHVIPRAGHNAHRENPAGVIASLAQILRF.

It belongs to the AB hydrolase superfamily. MenH family. In terms of assembly, monomer.

The catalysed reaction is 5-enolpyruvoyl-6-hydroxy-2-succinyl-cyclohex-3-ene-1-carboxylate = (1R,6R)-6-hydroxy-2-succinyl-cyclohexa-2,4-diene-1-carboxylate + pyruvate. The protein operates within quinol/quinone metabolism; 1,4-dihydroxy-2-naphthoate biosynthesis; 1,4-dihydroxy-2-naphthoate from chorismate: step 3/7. It participates in quinol/quinone metabolism; menaquinone biosynthesis. Catalyzes a proton abstraction reaction that results in 2,5-elimination of pyruvate from 2-succinyl-5-enolpyruvyl-6-hydroxy-3-cyclohexene-1-carboxylate (SEPHCHC) and the formation of 2-succinyl-6-hydroxy-2,4-cyclohexadiene-1-carboxylate (SHCHC). The polypeptide is 2-succinyl-6-hydroxy-2,4-cyclohexadiene-1-carboxylate synthase (Escherichia coli O8 (strain IAI1)).